The primary structure comprises 126 residues: Large ribosomal subunit protein bL12 (126 aa).

Belongs to the bacterial ribosomal protein bL12 family. In terms of assembly, homodimer. Part of the ribosomal stalk of the 50S ribosomal subunit. Forms a multimeric L10(L12)X complex, where L10 forms an elongated spine to which 2 to 4 L12 dimers bind in a sequential fashion. Binds GTP-bound translation factors.

In terms of biological role, forms part of the ribosomal stalk which helps the ribosome interact with GTP-bound translation factors. Is thus essential for accurate translation. This chain is Large ribosomal subunit protein bL12, found in Nitrosococcus oceani (strain ATCC 19707 / BCRC 17464 / JCM 30415 / NCIMB 11848 / C-107).